A 379-amino-acid chain; its full sequence is MCYYISILIYWGADCRTVGTGPVLMYCTKTIRSYFRCRHPFFSSINSSQIFFLSLLIAGECMFIPSAWPRVSTFHRLFIPALALLPYVFLYASVVTKSYITHENHEDEMARYPYDRVIFNPGHRCRTCDFLKPARSKHCSFCKACVSRHDHHCVWLTNCVGRNNYHYFLSLLLSLSLMLAYGSWLGFSLVSQTLEGLIPSSSPLRSKSQDWTTWLNVWAIAIASDIRVGAVAMLTAMTAPLAMAFLLYHTYLIWAGMTTNESAKWSDWKEDVADGLVFKSTRSEIYGNQSHSDEDTPAQRTWPVSSNQILVITDGEPPKEGFQLCSRSNEILQKDDPQAPVDTRWTEVNSMREIDNIYDLGFWDNLREVFHMPIRRCVR.

Residues 1 to 4 (MCYY) lie on the Lumenal side of the membrane. A helical transmembrane segment spans residues 5–25 (ISILIYWGADCRTVGTGPVLM). Over 26-48 (YCTKTIRSYFRCRHPFFSSINSS) the chain is Cytoplasmic. Residues 49–69 (QIFFLSLLIAGECMFIPSAWP) traverse the membrane as a helical segment. Over 70–76 (RVSTFHR) the chain is Lumenal. Residues 77–97 (LFIPALALLPYVFLYASVVTK) traverse the membrane as a helical segment. The Cytoplasmic segment spans residues 98–166 (SYITHENHED…TNCVGRNNYH (69 aa)). The region spanning 123–173 (HRCRTCDFLKPARSKHCSFCKACVSRHDHHCVWLTNCVGRNNYHYFLSLLL) is the DHHC domain. Cys-153 serves as the catalytic S-palmitoyl cysteine intermediate. The chain crosses the membrane as a helical span at residues 167–187 (YFLSLLLSLSLMLAYGSWLGF). Residues 188–227 (SLVSQTLEGLIPSSSPLRSKSQDWTTWLNVWAIAIASDIR) are Lumenal-facing. The helical transmembrane segment at 228-248 (VGAVAMLTAMTAPLAMAFLLY) threads the bilayer. The Cytoplasmic portion of the chain corresponds to 249–379 (HTYLIWAGMT…FHMPIRRCVR (131 aa)).

This sequence belongs to the DHHC palmitoyltransferase family. SWF1 subfamily.

The protein localises to the endoplasmic reticulum membrane. It catalyses the reaction L-cysteinyl-[protein] + hexadecanoyl-CoA = S-hexadecanoyl-L-cysteinyl-[protein] + CoA. Its function is as follows. Palmitoyltransferase that targets several endosomal SNAREs. Palmitoylates the SNAREs at cysteine residues close to the cytoplasmic end of their transmembrane domain. May have a role in the cellular quality control of transmembrane domain-containing proteins. In Aspergillus fumigatus (strain ATCC MYA-4609 / CBS 101355 / FGSC A1100 / Af293) (Neosartorya fumigata), this protein is Palmitoyltransferase swf1 (swf1).